The chain runs to 316 residues: Pantothenate kinase (316 aa).

95-102 (GSVAVGKS) is a binding site for ATP.

Belongs to the prokaryotic pantothenate kinase family.

It is found in the cytoplasm. The enzyme catalyses (R)-pantothenate + ATP = (R)-4'-phosphopantothenate + ADP + H(+). Its pathway is cofactor biosynthesis; coenzyme A biosynthesis; CoA from (R)-pantothenate: step 1/5. The chain is Pantothenate kinase from Shewanella baltica (strain OS223).